Consider the following 126-residue polypeptide: C-type natriuretic peptide (126 aa).

The N-terminal stretch at 1-23 (MHLSQLIACALLLALLSLRPSEA) is a signal peptide. The segment at 20–73 (PSEAKPGTPPKVPRTPPGEELADSQAAGGNQKKGDKTPGSGGANLKGDRSRLLR) is disordered. Residues 24 to 73 (KPGTPPKVPRTPPGEELADSQAAGGNQKKGDKTPGSGGANLKGDRSRLLR) constitute a propeptide that is removed on maturation. Pro residues predominate over residues 26 to 35 (GTPPKVPRTP). The cysteines at positions 110 and 126 are disulfide-linked.

This sequence belongs to the natriuretic peptide family. Post-translationally, degraded by IDE (in vitro).

The protein localises to the secreted. Hormone which plays a role in endochondral ossification through regulation of cartilaginous growth plate chondrocytes proliferation and differentiation. May also be vasoactive and natriuretic. Acts by specifically binding and stimulating NPR2 to produce cGMP. Binds the clearance receptor NPR3. The protein is C-type natriuretic peptide (Nppc) of Mus musculus (Mouse).